The sequence spans 381 residues: L-lactate dehydrogenase (381 aa).

One can recognise an FMN hydroxy acid dehydrogenase domain in the interval 1–380; sequence MIISASTDYR…SADSLVRELG (380 aa). Tyr-24 is a binding site for substrate. FMN-binding residues include Ser-106 and Gln-127. Tyr-129 provides a ligand contact to substrate. An FMN-binding site is contributed by Thr-155. Arg-164 is a binding site for substrate. Lys-251 is an FMN binding site. His-275 functions as the Proton acceptor in the catalytic mechanism. Substrate is bound at residue Arg-278. 306–330 provides a ligand contact to FMN; the sequence is DSGIRTGLDVVRMIALGADSVLLGR.

It belongs to the FMN-dependent alpha-hydroxy acid dehydrogenase family. As to quaternary structure, homotetramer. Requires FMN as cofactor.

The protein resides in the cell inner membrane. It catalyses the reaction (S)-lactate + A = pyruvate + AH2. Catalyzes the conversion of L-lactate to pyruvate. Is coupled to the respiratory chain. This Pseudomonas aeruginosa (strain LESB58) protein is L-lactate dehydrogenase.